Here is a 291-residue protein sequence, read N- to C-terminus: Proline iminopeptidase (291 aa).

In terms of domain architecture, AB hydrolase-1 spans 30-274; sequence LLIHGGPGSS…ANSRHLALLD (245 aa). The Nucleophile role is filled by serine 103. Residue aspartate 242 is part of the active site. Histidine 269 functions as the Proton donor in the catalytic mechanism.

This sequence belongs to the peptidase S33 family.

It is found in the cell envelope. The catalysed reaction is Release of N-terminal proline from a peptide.. Its function is as follows. Releases the N-terminal proline from various substrates. The protein is Proline iminopeptidase of Lacticaseibacillus rhamnosus (strain Lc 705) (Lactobacillus rhamnosus).